Here is a 383-residue protein sequence, read N- to C-terminus: Galactokinase (383 aa).

34–37 is a binding site for substrate; sequence EHTD. 124 to 130 contributes to the ATP binding site; sequence GAGLSSS. The Mg(2+) site is built by Ser-130 and Glu-162. Catalysis depends on Asp-174, which acts as the Proton acceptor. A substrate-binding site is contributed by Tyr-223.

The protein belongs to the GHMP kinase family. GalK subfamily.

The protein localises to the cytoplasm. It carries out the reaction alpha-D-galactose + ATP = alpha-D-galactose 1-phosphate + ADP + H(+). It participates in carbohydrate metabolism; galactose metabolism. In terms of biological role, catalyzes the transfer of the gamma-phosphate of ATP to D-galactose to form alpha-D-galactose-1-phosphate (Gal-1-P). This chain is Galactokinase, found in Serratia proteamaculans (strain 568).